We begin with the raw amino-acid sequence, 607 residues long: Large ribosomal subunit assembly factor BipA (607 aa).

The region spanning 3 to 198 is the tr-type G domain; sequence ENLRNIAIIA…AIVDHVPAPD (196 aa). GTP-binding positions include 15 to 20 and 128 to 131; these read DHGKTT and NKVD. The segment at 481–607 is C-terminal domain (CTD), required but not sufficient to bind 70S or 30S ribosomes; sequence GQRQNGVLIS…RRANRGQKEE (127 aa).

Belongs to the TRAFAC class translation factor GTPase superfamily. Classic translation factor GTPase family. BipA subfamily. As to quaternary structure, monomer.

The protein localises to the cytoplasm. It catalyses the reaction GTP + H2O = GDP + phosphate + H(+). With respect to regulation, ribosome-associated GTPase is not affected by low levels of ppGpp, &gt;40 uM ppGpp and &gt;50 uM GDP inhibit GTPase. The C-terminus (residues 387-607 or 481-607) inhibits GTPase activity, in its absence kcat increases, but GTPase is no longer stimulated by 70S ribosome or 30S or 50S subunits. Functionally, a 50S ribosomal subunit assembly protein with GTPase activity, required for 50S subunit assembly at low temperatures, may also play a role in translation. Binds GTP and analogs. Binds the 70S ribosome between the 30S and 50S subunits, in a similar position as ribosome-bound EF-G; it contacts a number of ribosomal proteins, both rRNAs and the A-site tRNA. A ribosome-stimulated GTPase, GTPase activity increases 4 fold in the presence of 70S ribosomes. Binds 70S ribosomes in the presence of GTP or its non-hydrolyzable analog GMPPNP; in the presence of ppGpp or under stress conditions it binds to 30S ribosomal subunits. The protein is Large ribosomal subunit assembly factor BipA of Salmonella typhimurium (strain LT2 / SGSC1412 / ATCC 700720).